Here is a 299-residue protein sequence, read N- to C-terminus: Phosphatidylserine decarboxylase proenzyme (299 aa).

Catalysis depends on charge relay system; for autoendoproteolytic cleavage activity residues Asp115, His171, and Ser258. Catalysis depends on Ser258, which acts as the Schiff-base intermediate with substrate; via pyruvic acid; for decarboxylase activity. A Pyruvic acid (Ser); by autocatalysis modification is found at Ser258.

Belongs to the phosphatidylserine decarboxylase family. PSD-B subfamily. Prokaryotic type II sub-subfamily. Heterodimer of a large membrane-associated beta subunit and a small pyruvoyl-containing alpha subunit. The cofactor is pyruvate. Post-translationally, is synthesized initially as an inactive proenzyme. Formation of the active enzyme involves a self-maturation process in which the active site pyruvoyl group is generated from an internal serine residue via an autocatalytic post-translational modification. Two non-identical subunits are generated from the proenzyme in this reaction, and the pyruvate is formed at the N-terminus of the alpha chain, which is derived from the carboxyl end of the proenzyme. The autoendoproteolytic cleavage occurs by a canonical serine protease mechanism, in which the side chain hydroxyl group of the serine supplies its oxygen atom to form the C-terminus of the beta chain, while the remainder of the serine residue undergoes an oxidative deamination to produce ammonia and the pyruvoyl prosthetic group on the alpha chain. During this reaction, the Ser that is part of the protease active site of the proenzyme becomes the pyruvoyl prosthetic group, which constitutes an essential element of the active site of the mature decarboxylase.

The protein localises to the cell membrane. It carries out the reaction a 1,2-diacyl-sn-glycero-3-phospho-L-serine + H(+) = a 1,2-diacyl-sn-glycero-3-phosphoethanolamine + CO2. It functions in the pathway phospholipid metabolism; phosphatidylethanolamine biosynthesis; phosphatidylethanolamine from CDP-diacylglycerol: step 2/2. Functionally, catalyzes the formation of phosphatidylethanolamine (PtdEtn) from phosphatidylserine (PtdSer). The polypeptide is Phosphatidylserine decarboxylase proenzyme (Chlamydia caviae (strain ATCC VR-813 / DSM 19441 / 03DC25 / GPIC) (Chlamydophila caviae)).